The chain runs to 374 residues: 4-galactosyl-N-acetylglucosaminide 3-alpha-L-fucosyltransferase FUT5 (374 aa).

Residues 1-15 (MDPLGPAKPQWLWRR) lie on the Cytoplasmic side of the membrane. A helical; Signal-anchor for type II membrane protein membrane pass occupies residues 16–34 (CLAGLLFQLLVAVCFFSYL). Topologically, residues 35-374 (RVSQDHATGS…TVRSIAAWFT (340 aa)) are lumenal. N-linked (GlcNAc...) asparagine glycosylation is found at asparagine 60, asparagine 105, asparagine 167, and asparagine 198.

This sequence belongs to the glycosyltransferase 10 family.

The protein resides in the golgi apparatus. Its subcellular location is the golgi stack membrane. It catalyses the reaction a beta-D-galactosyl-(1-&gt;3)-N-acetyl-beta-D-glucosaminyl derivative + GDP-beta-L-fucose = a beta-D-galactosyl-(1-&gt;3)-[alpha-L-fucosyl-(1-&gt;4)]-N-acetyl-beta-D-glucosaminyl derivative + GDP + H(+). The catalysed reaction is an N-acetyl-alpha-neuraminyl-(2-&gt;3)-beta-D-galactosyl-(1-&gt;4)-N-acetyl-beta-D-glucosaminyl derivative + GDP-beta-L-fucose = an alpha-Neu5Ac-(2-&gt;3)-beta-D-Gal-(1-&gt;4)-[alpha-L-Fuc-(1-&gt;3)]-beta-D-GlcNAc derivative + GDP + H(+). The enzyme catalyses an alpha-Neu5Ac-(2-&gt;3)-beta-D-Gal-(1-&gt;4)-beta-D-GlcNAc-(1-&gt;3)-beta-D-Gal-(1-&gt;4)-[alpha-L-Fuc-(1-&gt;3)]-beta-D-GlcNAc derivative + GDP-beta-L-fucose = an alpha-Neu5Ac-(2-&gt;3)-beta-D-Gal-(1-&gt;4)-[alpha-L-Fuc-(1-&gt;3)]-beta-D-GlcNAc-(1-&gt;3)-beta-D-Gal-(1-&gt;4)-[alpha-L-Fuc-(1-&gt;3)]-beta-D-GlcNAc derivative + GDP + H(+). It carries out the reaction a beta-D-galactosyl-(1-&gt;4)-N-acetyl-beta-D-glucosaminyl derivative + GDP-beta-L-fucose = a beta-D-galactosyl-(1-&gt;4)-[alpha-L-fucosyl-(1-&gt;3)]-N-acetyl-beta-D-glucosaminyl derivative + GDP + H(+). It catalyses the reaction a neolactoside nLc4Cer + GDP-beta-L-fucose = a neolactoside III(3)-alpha-Fuc-nLc4Cer + GDP + H(+). The catalysed reaction is a neolactoside nLc6Cer + GDP-beta-L-fucose = beta-D-galactosyl-(1-&gt;4)-N-acetyl-beta-D-glucosaminyl-(1-&gt;3)-beta-D-galactosyl-(1-&gt;4)-[alpha-L-fucosyl-(1-&gt;3)]-N-acetyl-beta-D-glucosaminyl-(1-&gt;3)-beta-D-galactosyl-(1-&gt;4)-beta-D-glucosyl-(1&lt;-&gt;1')-ceramide + GDP + H(+). The enzyme catalyses a neolactoside nLc6Cer(d18:1(4E)) + GDP-beta-L-fucose = a neolactoside III(3)-alpha-Fuc-nLc6Cer(d18:1(4E)) + GDP + H(+). It carries out the reaction a neolactoside nLc4Cer(d18:1(4E)) + GDP-beta-L-fucose = a neolactoside III(3)-alpha-Fuc-nLc4Cer(d18:1(4E)) + GDP + H(+). It catalyses the reaction a neolactoside VI(3)-alpha-NeuNAc-nLc6Cer + GDP-beta-L-fucose = a neolactoside VI(3)-alpha-NeuAc,III(3)-alphaFuc-nLc6Cer + GDP + H(+). The catalysed reaction is beta-D-galactosyl-(1-&gt;4)-N-acetyl-D-glucosamine + GDP-beta-L-fucose = beta-D-galactosyl-(1-&gt;4)-[alpha-L-fucosyl-(1-&gt;3)]-N-acetyl-D-glucosamine + GDP + H(+). The enzyme catalyses N-acetyl-alpha-neuraminosyl-(2-&gt;3)-beta-D-galactosyl-(1-&gt;4)-N-acetyl-beta-D-glucosamine + GDP-beta-L-fucose = N-acetyl-alpha-neuraminosyl-(2-&gt;3)-beta-D-galactosyl-(1-&gt;4)-[alpha-L-fucosyl-(1-&gt;3)]-N-acetyl-beta-D-glucosamine + GDP + H(+). It carries out the reaction alpha-L-Fuc-(1-&gt;2)-beta-D-Gal-(1-&gt;4)-D-GlcNAc + GDP-beta-L-fucose = alpha-L-Fuc-(1-&gt;2)-beta-D-Gal-(1-&gt;4)-[alpha-L-Fuc-(1-&gt;3)]-D-GlcNAc + GDP + H(+). It catalyses the reaction an alpha-Neu5Ac-(2-&gt;3)-beta-D-Gal-(1-&gt;3)-D-GlcNAc derivative + GDP-beta-L-fucose = an alpha-Neu5Ac-(2-&gt;3)-beta-D-Gal-(1-&gt;3)-[alpha-L-Fuc-(1-&gt;4)]-beta-D-GlcNAc derivative + GDP + H(+). Its pathway is protein modification; protein glycosylation. In terms of biological role, catalyzes preferentially the transfer of L-fucose, from a guanosine diphosphate-beta-L-fucose, to the N-acetyl-beta-D-glucosamine (GlcNAc) of an N-acetyllactosamine unit (type 2 chain) of an oligosaccharide, or a glycoprotein- and a glycolipid-linked N-acetyllactosamine unit via an alpha (1,3) linkage and participates in the surface expression of VIM-2, Lewis X/SSEA-1 and sialyl Lewis X antigens. Preferentially transfers fucose to the GlcNAc of an internal N-acetyllactosamine unit of a poly-N-acetyllactosamine chain acceptor substrate. Also catalyzes to a lesser extend the transfer of L-fucose to the GlcNAc of a type 1 (beta-D-galactosyl-(1-&gt;3)-N-acetyl-beta-D-glucosaminyl) or H-type 1 (alpha-L-Fuc-(1-&gt;2)-beta-D-Gal-(1-&gt;3)-D-GlcNAc) chain oligosaccharide via an alpha (1,4) linkage. Preferentially catalyzes sialylated type 2 oligosaccharide acceptors over neutral type 2 or H type 2 (alpha-L-Fuc-(1-&gt;2)-beta-D-Gal-(1-&gt;4)-D-GlcNAc) oligosaccharide acceptors. Lactose-based structures are also acceptor substrates. In Gorilla gorilla gorilla (Western lowland gorilla), this protein is 4-galactosyl-N-acetylglucosaminide 3-alpha-L-fucosyltransferase FUT5.